The following is a 240-amino-acid chain: tRNA (guanine-N(1)-)-methyltransferase (240 aa).

S-adenosyl-L-methionine contacts are provided by residues glycine 111 and 130 to 135 (IGDYVI).

This sequence belongs to the RNA methyltransferase TrmD family. In terms of assembly, homodimer.

Its subcellular location is the cytoplasm. The catalysed reaction is guanosine(37) in tRNA + S-adenosyl-L-methionine = N(1)-methylguanosine(37) in tRNA + S-adenosyl-L-homocysteine + H(+). In terms of biological role, specifically methylates guanosine-37 in various tRNAs. The sequence is that of tRNA (guanine-N(1)-)-methyltransferase from Mycoplasma capricolum subsp. capricolum (strain California kid / ATCC 27343 / NCTC 10154).